Reading from the N-terminus, the 346-residue chain is D-fructose 1,6-bisphosphatase class 2/sedoheptulose 1,7-bisphosphatase 1 (346 aa).

Residues aspartate 33, glutamate 57, aspartate 97, and glutamate 100 each contribute to the Mn(2+) site. Substrate-binding positions include 100–102 (EGT), tyrosine 131, 176–178 (RAR), and 198–200 (DGD). Position 225 (glutamate 225) interacts with Mn(2+).

This sequence belongs to the FBPase class 2 family. In terms of assembly, homotetramer. Requires Mn(2+) as cofactor.

The catalysed reaction is beta-D-fructose 1,6-bisphosphate + H2O = beta-D-fructose 6-phosphate + phosphate. It catalyses the reaction D-sedoheptulose 1,7-bisphosphate + H2O = D-sedoheptulose 7-phosphate + phosphate. It functions in the pathway carbohydrate biosynthesis; Calvin cycle. Its function is as follows. Catalyzes the hydrolysis of fructose 1,6-bisphosphate (Fru 1,6-P2) and sedoheptulose 1,7-bisphosphate (Sed 1,7-P2) to fructose 6-phosphate and sedoheptulose 7-phosphate, respectively. In Acaryochloris marina (strain MBIC 11017), this protein is D-fructose 1,6-bisphosphatase class 2/sedoheptulose 1,7-bisphosphatase 1.